We begin with the raw amino-acid sequence, 310 residues long: Vomeronasal type-1 receptor 90 (310 aa).

The Extracellular segment spans residues 1–20; the sequence is MRRISTLYGVVDKQAIFFSE. A helical membrane pass occupies residues 21–41; that stretch reads VVIGISFNSILFLFHIFQFLL. The Cytoplasmic segment spans residues 42–46; it reads ERRLR. A helical membrane pass occupies residues 47 to 67; sequence ITDLIISLLALIHLGMLTVMG. Topologically, residues 68–93 are extracellular; that stretch reads FRAVDIFASQNVWNDIKCKSLAHLHR. C85 and C172 form a disulfide bridge. The chain crosses the membrane as a helical span at residues 94-114; that stretch reads LLRGLSLCATCLLSIFQAITL. Topologically, residues 115–135 are cytoplasmic; it reads SPRSSCLAKFKYKSTQHSLCS. The helical transmembrane segment at 136–156 threads the bilayer; that stretch reads LLVLWAFYMSCGTHYSFTIVA. Over 157-183 the chain is Extracellular; sequence DYNFSSRSLIFVTESCIILPMDYITRH. N159 is a glycosylation site (N-linked (GlcNAc...) asparagine). A helical transmembrane segment spans residues 184 to 204; sequence LFFILGIFRDVSFIGLMALSS. Residues 205–238 are Cytoplasmic-facing; it reads GYMVALLCRHRKQAQHLHRTSLSPKASPEQRATR. Residues 239 to 259 traverse the membrane as a helical segment; that stretch reads TILLLMSFFVLMYCLDCTISA. The Extracellular segment spans residues 260-271; sequence SRLMHNGEPIHH. Residues 272–292 form a helical membrane-spanning segment; sequence SIQMMVSNSYATLSPLLLIVT. Residues 293–310 are Cytoplasmic-facing; the sequence is ENRISRFLKSLLGRTVDA.

This sequence belongs to the G-protein coupled receptor 1 family. In terms of tissue distribution, expressed in 1-4% of neurons of the vomeronasal organ. Only one pheromone receptor gene may be expressed in a particular neuron. Not expressed in the main olfactory epithelium.

The protein resides in the cell membrane. Functionally, putative pheromone receptor implicated in the regulation of social as well as reproductive behavior. This Rattus norvegicus (Rat) protein is Vomeronasal type-1 receptor 90 (Vom1r90).